Here is a 1765-residue protein sequence, read N- to C-terminus: RANBP2-like and GRIP domain-containing protein 8 (1765 aa).

Thr19 is subject to Phosphothreonine. Ser21 carries the post-translational modification Phosphoserine. TPR repeat units lie at residues 26–59, 60–93, and 648–681; these read SMKG…QERD, PKAH…NPTQ, and EDAH…VSYW. A disordered region spans residues 760 to 804; it reads GPLYKNGSLRNADSEIKHSTPSPTKYSLSPSKSYKYSPETPPRWT. Low complexity predominate over residues 778–797; that stretch reads STPSPTKYSLSPSKSYKYSP. Residues 1036 to 1172 enclose the RanBD1 1 domain; sequence HFEPVVQMPE…FEECQRLLLD (137 aa). 2 disordered regions span residues 1216-1247 and 1306-1330; these read TEEE…PTLE and AKLN…EERD. The segment covering 1231–1244 has biased composition (polar residues); that stretch reads SDTTIKPNAENTGP. A compositionally biased stretch (acidic residues) spans 1317 to 1329; it reads TDEESVVTQEEER. The 137-residue stretch at 1333 to 1469 folds into the RanBD1 2 domain; sequence YFEPVVPLPD…FDEAKTAQEK (137 aa). Polar residues predominate over residues 1580–1593; it reads NNSETSSVAQSGSE. Disordered stretches follow at residues 1580-1621 and 1746-1765; these read NNSE…KNLS and KGKL…RSSG. Basic and acidic residues predominate over residues 1594–1617; it reads SKVEPKKCELSKNSDIEQSSDSKV. A GRIP domain is found at 1702 to 1752; the sequence is REKSAANLEYLKNVLLQFIFLKPGSERERLLPVINTMLQLSPEEKGKLAAV.

Interacts with GTP-bound ARL1.

The chain is RANBP2-like and GRIP domain-containing protein 8 (RGPD8) from Homo sapiens (Human).